We begin with the raw amino-acid sequence, 268 residues long: Activator of basal transcription 1 (268 aa).

A coiled-coil region spans residues 6-38 (KLVEEQKAAMEEEKEVNAEAAEELEEAEEASCN). The region spanning 47–144 (GIVYLGHVPP…RKRSPFRYDL (98 aa)) is the RRM domain. Positions 163 to 193 (AFERQVRRQRLRAEVAQAKRETDFYLRNVEQ) form a coiled coil. A disordered region spans residues 200–242 (ADGDATRPNSSWTFTQRPTEQELRAQKGARPGGRERARLATVQ). Polar residues predominate over residues 206 to 217 (RPNSSWTFTQRP).

This sequence belongs to the ESF2/ABP1 family. Interacts with IGHMBP2. Interacts with ESF1/ABTAP.

Its subcellular location is the nucleus. The protein localises to the nucleolus. Functionally, may be a novel TATA-binding protein (TBP) which can function as a basal transcription activator. Can act as a regulator of basal transcription for class II genes. In Rattus norvegicus (Rat), this protein is Activator of basal transcription 1 (Abt1).